Here is a 475-residue protein sequence, read N- to C-terminus: Cobyric acid synthase (475 aa).

Residues 244-431 (KLNVVVPVLT…LHGFFDEADV (188 aa)) enclose the GATase cobBQ-type domain. The Nucleophile role is filled by Cys325. Residue His423 is part of the active site.

It belongs to the CobB/CobQ family. CobQ subfamily.

It participates in cofactor biosynthesis; adenosylcobalamin biosynthesis. Catalyzes amidations at positions B, D, E, and G on adenosylcobyrinic A,C-diamide. NH(2) groups are provided by glutamine, and one molecule of ATP is hydrogenolyzed for each amidation. In Vibrio campbellii (strain ATCC BAA-1116), this protein is Cobyric acid synthase.